Consider the following 201-residue polypeptide: MKVVAFERKEQGTGASRRLRNAGKTTGIVYGGEAAPQMIELDHNALWHALKKEAFHSSILDLEVAGQSQQVLLRDVQYHPFKQLVLHVDFQRVDAKKKLHTKVPLHFLNAEVSPAVKLSSAIVSHVATEIEVECLPAALPEFLEVDLSKIEAGQSIHAKDIALPKGVALTAHVDAENPVIASATIPAGAVSDAAEGETPAA.

Belongs to the bacterial ribosomal protein bL25 family. CTC subfamily. As to quaternary structure, part of the 50S ribosomal subunit; part of the 5S rRNA/L5/L18/L25 subcomplex. Contacts the 5S rRNA. Binds to the 5S rRNA independently of L5 and L18.

This is one of the proteins that binds to the 5S RNA in the ribosome where it forms part of the central protuberance. This Burkholderia multivorans (strain ATCC 17616 / 249) protein is Large ribosomal subunit protein bL25.